A 356-amino-acid polypeptide reads, in one-letter code: Butyrate kinase (356 aa).

The protein belongs to the acetokinase family.

Its subcellular location is the cytoplasm. The enzyme catalyses butanoate + ATP = butanoyl phosphate + ADP. It functions in the pathway lipid metabolism; butanoate metabolism. In terms of biological role, catalyzes the conversion of butyryl-CoA through butyryl phosphate to butyrate. The polypeptide is Butyrate kinase (buk) (Clostridium perfringens (strain ATCC 13124 / DSM 756 / JCM 1290 / NCIMB 6125 / NCTC 8237 / Type A)).